We begin with the raw amino-acid sequence, 132 residues long: Large ribosomal subunit protein uL14 (132 aa).

It belongs to the universal ribosomal protein uL14 family. Part of the 50S ribosomal subunit. Forms a cluster with proteins L3 and L24e, part of which may contact the 16S rRNA in 2 intersubunit bridges.

Binds to 23S rRNA. Forms part of two intersubunit bridges in the 70S ribosome. The protein is Large ribosomal subunit protein uL14 of Methanocorpusculum labreanum (strain ATCC 43576 / DSM 4855 / Z).